Here is a 241-residue protein sequence, read N- to C-terminus: uncharacterized protein (241 aa).

The region spanning serine 22–valine 78 is the Cupin type-2 domain. Residues tyrosine 137 to threonine 235 enclose the HTH araC/xylS-type domain. 2 DNA-binding regions (H-T-H motif) span residues lysine 154–threonine 175 and leucine 202–threonine 225.

This is an uncharacterized protein from Bacillus subtilis (strain 168).